Consider the following 145-residue polypeptide: MRILVLNGPNLNLLGRREPDVYGDVSLKGLAAELMLRAPEDVELTFKQSNHEGDLIDALHDAFDYEGVILNAGAYTHTSIAIRDAISAIAAPVVEVHISNVHARETFRHESKLAAVCIGVITGFGLTSYTLAMHALIEHWRNRHD.

Tyr-22 serves as the catalytic Proton acceptor. 3 residues coordinate substrate: Asn-71, His-77, and Asp-84. The active-site Proton donor is the His-97. Substrate is bound by residues 98 to 99 (IS) and Arg-108.

The protein belongs to the type-II 3-dehydroquinase family. In terms of assembly, homododecamer.

It carries out the reaction 3-dehydroquinate = 3-dehydroshikimate + H2O. It participates in metabolic intermediate biosynthesis; chorismate biosynthesis; chorismate from D-erythrose 4-phosphate and phosphoenolpyruvate: step 3/7. Functionally, catalyzes a trans-dehydration via an enolate intermediate. This Exiguobacterium sp. (strain ATCC BAA-1283 / AT1b) protein is 3-dehydroquinate dehydratase.